The primary structure comprises 277 residues: Secoisolariciresinol dehydrogenase (277 aa).

NAD(+) contacts are provided by residues G24–I29, D48, V73, and N99. S163 contacts substrate. The active-site Proton donor/acceptor is Y166. An NAD(+)-binding site is contributed by K170.

It belongs to the short-chain dehydrogenases/reductases (SDR) family. As to quaternary structure, homotetramer.

The catalysed reaction is (-)-secoisolariciresinol + 2 NAD(+) = (-)-matairesinol + 2 NADH + 2 H(+). Functionally, oxidoreductase involved in lignan biosynthesis. Catalyzes the stereospecific conversion of (-)-secoisolariciresinol to (-)-matairesinol via a lactol intermediate. The chain is Secoisolariciresinol dehydrogenase from Forsythia intermedia (Border forsythia).